The following is a 468-amino-acid chain: Ribosomal protein uS12 methylthiotransferase RimO (468 aa).

Residues 18–129 (PTVAFAHLGC…IVEVLERVEA (112 aa)) enclose the MTTase N-terminal domain. [4Fe-4S] cluster-binding residues include Cys-27, Cys-63, Cys-92, Cys-167, Cys-171, and Cys-174. Residues 153-382 (TTGEAVAYLK…MTLQQPISAA (230 aa)) form the Radical SAM core domain. Residues 385–456 (ARWVGRTVDA…IYDLRAEIVG (72 aa)) form the TRAM domain.

Belongs to the methylthiotransferase family. RimO subfamily. The cofactor is [4Fe-4S] cluster.

Its subcellular location is the cytoplasm. It carries out the reaction L-aspartate(89)-[ribosomal protein uS12]-hydrogen + (sulfur carrier)-SH + AH2 + 2 S-adenosyl-L-methionine = 3-methylsulfanyl-L-aspartate(89)-[ribosomal protein uS12]-hydrogen + (sulfur carrier)-H + 5'-deoxyadenosine + L-methionine + A + S-adenosyl-L-homocysteine + 2 H(+). Its function is as follows. Catalyzes the methylthiolation of an aspartic acid residue of ribosomal protein uS12. The sequence is that of Ribosomal protein uS12 methylthiotransferase RimO from Synechococcus sp. (strain WH7803).